A 162-amino-acid polypeptide reads, in one-letter code: Inorganic pyrophosphatase (162 aa).

A Mg(2+)-binding site is contributed by Glu8. 3 residues coordinate substrate: Lys16, Arg30, and Tyr42. Positions 52, 57, 84, and 89 each coordinate Mg(2+). Asp89 functions as the Proton acceptor in the catalytic mechanism. Tyr126 contributes to the substrate binding site.

It belongs to the PPase family. As to quaternary structure, homohexamer. Requires Mg(2+) as cofactor.

It localises to the cytoplasm. The catalysed reaction is diphosphate + H2O = 2 phosphate + H(+). Functionally, catalyzes the hydrolysis of inorganic pyrophosphate (PPi) forming two phosphate ions. This Mycobacterium bovis (strain ATCC BAA-935 / AF2122/97) protein is Inorganic pyrophosphatase.